The chain runs to 238 residues: Phosphoribosylaminoimidazole-succinocarboxamide synthase (238 aa).

The protein belongs to the SAICAR synthetase family.

The catalysed reaction is 5-amino-1-(5-phospho-D-ribosyl)imidazole-4-carboxylate + L-aspartate + ATP = (2S)-2-[5-amino-1-(5-phospho-beta-D-ribosyl)imidazole-4-carboxamido]succinate + ADP + phosphate + 2 H(+). The protein operates within purine metabolism; IMP biosynthesis via de novo pathway; 5-amino-1-(5-phospho-D-ribosyl)imidazole-4-carboxamide from 5-amino-1-(5-phospho-D-ribosyl)imidazole-4-carboxylate: step 1/2. In Pyrococcus horikoshii (strain ATCC 700860 / DSM 12428 / JCM 9974 / NBRC 100139 / OT-3), this protein is Phosphoribosylaminoimidazole-succinocarboxamide synthase (purC).